The following is a 121-amino-acid chain: Large ribosomal subunit protein uL18c (121 aa).

This sequence belongs to the universal ribosomal protein uL18 family. Part of the 50S ribosomal subunit; contacts the 5S rRNA.

The protein resides in the plastid. It localises to the cyanelle. In terms of biological role, binds 5S rRNA, forms part of the central protuberance of the 50S subunit. In Cyanophora paradoxa, this protein is Large ribosomal subunit protein uL18c (rpl18).